A 688-amino-acid chain; its full sequence is Elongation factor G (688 aa).

Residues 8–282 (EKTRNIGIMA…AIIDYLPSPM (275 aa)) enclose the tr-type G domain. Residues 17-24 (AHIDAGKT), 81-85 (DTPGH), and 135-138 (NKMD) each bind GTP.

Belongs to the TRAFAC class translation factor GTPase superfamily. Classic translation factor GTPase family. EF-G/EF-2 subfamily.

It is found in the cytoplasm. Catalyzes the GTP-dependent ribosomal translocation step during translation elongation. During this step, the ribosome changes from the pre-translocational (PRE) to the post-translocational (POST) state as the newly formed A-site-bound peptidyl-tRNA and P-site-bound deacylated tRNA move to the P and E sites, respectively. Catalyzes the coordinated movement of the two tRNA molecules, the mRNA and conformational changes in the ribosome. This is Elongation factor G from Phytoplasma mali (strain AT).